The sequence spans 138 residues: MLQPKRRKYRKEQKGRNTGKATRGNAVSFGEFGLKAIGRGRLTARQIEAARRAMTRHIKRGGRIWIRIFPDKPISQKPAEVRMGNGKGNPEYYVAEIQPGKMLYEMDGVTEELAREAFRLAAAKLPLKTAFIVRQLGA.

Basic residues predominate over residues 1-13 (MLQPKRRKYRKEQ). The interval 1–24 (MLQPKRRKYRKEQKGRNTGKATRG) is disordered.

It belongs to the universal ribosomal protein uL16 family. Part of the 50S ribosomal subunit.

Functionally, binds 23S rRNA and is also seen to make contacts with the A and possibly P site tRNAs. This Burkholderia lata (strain ATCC 17760 / DSM 23089 / LMG 22485 / NCIMB 9086 / R18194 / 383) protein is Large ribosomal subunit protein uL16.